Reading from the N-terminus, the 216-residue chain is Large ribosomal subunit protein uL1 (216 aa).

The protein belongs to the universal ribosomal protein uL1 family.

This chain is Large ribosomal subunit protein uL1, found in Oryza sativa subsp. indica (Rice).